Here is a 158-residue protein sequence, read N- to C-terminus: SsrA-binding protein (158 aa).

Belongs to the SmpB family.

The protein resides in the cytoplasm. Its function is as follows. Required for rescue of stalled ribosomes mediated by trans-translation. Binds to transfer-messenger RNA (tmRNA), required for stable association of tmRNA with ribosomes. tmRNA and SmpB together mimic tRNA shape, replacing the anticodon stem-loop with SmpB. tmRNA is encoded by the ssrA gene; the 2 termini fold to resemble tRNA(Ala) and it encodes a 'tag peptide', a short internal open reading frame. During trans-translation Ala-aminoacylated tmRNA acts like a tRNA, entering the A-site of stalled ribosomes, displacing the stalled mRNA. The ribosome then switches to translate the ORF on the tmRNA; the nascent peptide is terminated with the 'tag peptide' encoded by the tmRNA and targeted for degradation. The ribosome is freed to recommence translation, which seems to be the essential function of trans-translation. This Caldicellulosiruptor saccharolyticus (strain ATCC 43494 / DSM 8903 / Tp8T 6331) protein is SsrA-binding protein.